The primary structure comprises 362 residues: Serpentine receptor class epsilon-37 (362 aa).

The next 7 membrane-spanning stretches (helical) occupy residues 29–49 (IFYV…YILV), 67–87 (IMMC…IVLI), 127–147 (IYFA…AVLA), 170–190 (IPIL…YQTT), 204–224 (IFIG…NLAW), 260–280 (LVVS…VLLF), and 288–308 (FFVH…SLTL).

Belongs to the nematode receptor-like protein sre family.

It is found in the membrane. This Caenorhabditis elegans protein is Serpentine receptor class epsilon-37 (sre-37).